A 288-amino-acid polypeptide reads, in one-letter code: Methyltransferase ucsB (288 aa).

Residues D87 and 121 to 122 each bind S-adenosyl-L-methionine; that span reads DA.

It belongs to the class I-like SAM-binding methyltransferase superfamily.

Its pathway is mycotoxin biosynthesis. Functionally, methyltransferase; part of the gene cluster that mediates the biosynthesis of UCS1025A, a member of the pyrrolizidinone family that acts as a strong telomerase inhibitor and displays potent antibacterial and antitumor properties. These compounds share a hemiaminal-containing pyrrolizidinone core fused with a gamma-lactone, giving a furopyrrolizidine that is connected to a decalin fragment. The polyketide synthase module (PKS) of the PKS-NRPS ucsA is responsible for the synthesis of the polyketide backbone via the condensation of an acetyl-CoA starter unit with 6 malonyl-CoA units. The downstream nonribosomal peptide synthetase (NRPS) module then amidates the carboxyl end of the polyketide with a 2S,3S-methylproline derived from L-isoleucine by the 2-oxoglutarate-dependent dioxygenase ucsF which converts L-isoleucine to (4S,5S)-4-methylpyrroline-5-carboxylate that is further converted to 2S,3S-methylproline by the pyrroline-5-carboxylate reductase ucsG. Reductive release of the completed aminoacyl polyketide from the assembly line can form the 3-pyrrolin-2-one structure via an intramolecular Knoevenagel reaction. Because ucsA lacks a designated enoylreductase (ER) domain, the required activity is provided the enoyl reductase ucsL. This keto acyclic precursor is the substrate of the Diels-Alderase ucsH, that catalyzes the Diels-Alder cycloaddition. Oxidation of the 3S-methyl group to a carboxylate by the cytochrome P450 monooxygenase ucsK allows an oxa-Michael cyclization that might involve the reductase/dehydrogenase ucsI and which furnishes the furopyrrolizidine. The oxidase ucsJ likely plays a critical role in stereoselective reduction of the C5-C6 double bond to afford the required R-configured carboxylate group. Further enolization and oxidation at C5 by an unidentified enzyme affords the last intermediate that can undergo oxa-Michael cyclization to yield UCS1025A. The polypeptide is Methyltransferase ucsB (Acremonium sp).